We begin with the raw amino-acid sequence, 190 residues long: uncharacterized protein (190 aa).

The protein to Synechocystis PCC 6803 sll1609 and slr1290.

This is an uncharacterized protein from Synechocystis sp. (strain ATCC 27184 / PCC 6803 / Kazusa).